A 373-amino-acid polypeptide reads, in one-letter code: Deoxyguanosinetriphosphate triphosphohydrolase-like protein 1 (373 aa).

The tract at residues 21–43 is disordered; sequence RSSEARRAVPEAPSETRTAYQKD. Residues 76–198 form the HD domain; sequence RLTHTLEVQQ…VDAADALAYT (123 aa).

This sequence belongs to the dGTPase family. Type 2 subfamily.

The polypeptide is Deoxyguanosinetriphosphate triphosphohydrolase-like protein 1 (Deinococcus radiodurans (strain ATCC 13939 / DSM 20539 / JCM 16871 / CCUG 27074 / LMG 4051 / NBRC 15346 / NCIMB 9279 / VKM B-1422 / R1)).